The chain runs to 443 residues: Thymidine phosphorylase (443 aa).

The protein belongs to the thymidine/pyrimidine-nucleoside phosphorylase family. Homodimer.

The enzyme catalyses thymidine + phosphate = 2-deoxy-alpha-D-ribose 1-phosphate + thymine. It functions in the pathway pyrimidine metabolism; dTMP biosynthesis via salvage pathway; dTMP from thymine: step 1/2. Functionally, the enzymes which catalyze the reversible phosphorolysis of pyrimidine nucleosides are involved in the degradation of these compounds and in their utilization as carbon and energy sources, or in the rescue of pyrimidine bases for nucleotide synthesis. The chain is Thymidine phosphorylase from Shewanella pealeana (strain ATCC 700345 / ANG-SQ1).